A 320-amino-acid chain; its full sequence is Mitochondrial thiamine pyrophosphate carrier (320 aa).

Solcar repeat units lie at residues 13–106, 116–202, and 214–309; these read NTKF…LTEL, REFS…LKHL, and NENL…FCNV. A helical membrane pass occupies residues 19-39; it reads AVAGSVSGLVTRALISPFDVI. At Ser-51 the chain carries Phosphoserine. The next 4 helical transmembrane spans lie at 87–107, 122–142, 173–193, and 220–240; these read ILSIGYGAVQFLSFEMLTELV, FVCGGLAACMATLTVHPVDVL, VFYKGLAPTLIAIFPYAGLQF, and LLCGSGAGVISKTLTYPLDLF. Residues 241 to 246 carry the Substrate recognition motif; the sequence is KKRLQV. A helical membrane pass occupies residues 293 to 313; that stretch reads ALSTGFMFFWYEFFCNVFHCM.

Belongs to the mitochondrial carrier (TC 2.A.29) family.

The protein localises to the mitochondrion membrane. It carries out the reaction thiamine phosphate(out) + thiamine diphosphate(in) = thiamine phosphate(in) + thiamine diphosphate(out). In terms of biological role, mitochondrial transporter mediating uptake of thiamine diphosphate into mitochondria. It is not clear if the antiporter activity is affected by the membrane potential or by the proton electrochemical gradient. In Pongo abelii (Sumatran orangutan), this protein is Mitochondrial thiamine pyrophosphate carrier (SLC25A19).